Reading from the N-terminus, the 331-residue chain is Phenylalanine--tRNA ligase alpha subunit (331 aa).

Position 252 (Glu252) interacts with Mg(2+).

It belongs to the class-II aminoacyl-tRNA synthetase family. Phe-tRNA synthetase alpha subunit type 1 subfamily. Tetramer of two alpha and two beta subunits. Mg(2+) serves as cofactor.

It is found in the cytoplasm. It catalyses the reaction tRNA(Phe) + L-phenylalanine + ATP = L-phenylalanyl-tRNA(Phe) + AMP + diphosphate + H(+). The sequence is that of Phenylalanine--tRNA ligase alpha subunit from Xanthomonas axonopodis pv. citri (strain 306).